Reading from the N-terminus, the 305-residue chain is External core antigen (305 aa).

An N-terminal signal peptide occupies residues methionine 1–phenylalanine 19. Residues alanine 226–lysine 305 form a disordered region. Composition is skewed to basic residues over residues arginine 258–glutamate 277 and serine 295–lysine 305. A propeptide spanning residues serine 273–lysine 305 is cleaved from the precursor.

The protein belongs to the avihepadnavirus precore antigen family. In terms of assembly, homodimerizes.

It localises to the secreted. In terms of biological role, may regulate immune response to the intracellular capsid in acting as a T-cell tolerogen, by having an immunoregulatory effect which prevents destruction of infected cells by cytotoxic T-cells. The polypeptide is External core antigen (C) (Duck hepatitis B virus (strain China) (DHBV)).